We begin with the raw amino-acid sequence, 55 residues long: uncharacterized protein (55 aa).

This is an uncharacterized protein from Salmonella typhimurium (strain LT2 / SGSC1412 / ATCC 700720).